Here is a 1042-residue protein sequence, read N- to C-terminus: Carbamoyl phosphate synthase large chain (1042 aa).

Residues Met1–Glu417 are carboxyphosphate synthetic domain. The ATP site is built by Arg127, Arg182, Gly188, Gly189, Glu221, Ile223, Glu228, Gly254, Ile255, His256, Gln297, and Glu314. Positions Arg131–Leu343 constitute an ATP-grasp 1 domain. Mg(2+) contacts are provided by Gln297, Glu314, and Asn316. Positions 297, 314, and 316 each coordinate Mn(2+). The interval Tyr418 to Arg558 is oligomerization domain. Positions Ala559–Ala947 are carbamoyl phosphate synthetic domain. In terms of domain architecture, ATP-grasp 2 spans Asn689–Ala880. 10 residues coordinate ATP: Arg725, Glu764, Leu766, Glu771, Gly796, Val797, His798, Ser799, Gln839, and Glu851. Mg(2+)-binding residues include Gln839, Glu851, and Asn853. Residues Gln839, Glu851, and Asn853 each contribute to the Mn(2+) site. In terms of domain architecture, MGS-like spans Ala947 to Gly1042. The segment at Pro948–Gly1042 is allosteric domain.

The protein belongs to the CarB family. Composed of two chains; the small (or glutamine) chain promotes the hydrolysis of glutamine to ammonia, which is used by the large (or ammonia) chain to synthesize carbamoyl phosphate. Tetramer of heterodimers (alpha,beta)4. Mg(2+) is required as a cofactor. Mn(2+) serves as cofactor.

It catalyses the reaction hydrogencarbonate + L-glutamine + 2 ATP + H2O = carbamoyl phosphate + L-glutamate + 2 ADP + phosphate + 2 H(+). It carries out the reaction hydrogencarbonate + NH4(+) + 2 ATP = carbamoyl phosphate + 2 ADP + phosphate + 2 H(+). It functions in the pathway amino-acid biosynthesis; L-arginine biosynthesis; carbamoyl phosphate from bicarbonate: step 1/1. The protein operates within pyrimidine metabolism; UMP biosynthesis via de novo pathway; (S)-dihydroorotate from bicarbonate: step 1/3. Large subunit of the glutamine-dependent carbamoyl phosphate synthetase (CPSase). CPSase catalyzes the formation of carbamoyl phosphate from the ammonia moiety of glutamine, carbonate, and phosphate donated by ATP, constituting the first step of 2 biosynthetic pathways, one leading to arginine and/or urea and the other to pyrimidine nucleotides. The large subunit (synthetase) binds the substrates ammonia (free or transferred from glutamine from the small subunit), hydrogencarbonate and ATP and carries out an ATP-coupled ligase reaction, activating hydrogencarbonate by forming carboxy phosphate which reacts with ammonia to form carbamoyl phosphate. This chain is Carbamoyl phosphate synthase large chain, found in Halobacterium salinarum (strain ATCC 700922 / JCM 11081 / NRC-1) (Halobacterium halobium).